We begin with the raw amino-acid sequence, 174 residues long: Zinc finger AN1 domain-containing stress-associated protein 15 (174 aa).

The disordered stretch occupies residues 1–61 (MAQESCDLNK…TPPAAAAAAS (61 aa)). Low complexity predominate over residues 18-41 (PSSSSSPSPSPTTASPSPPTAQMT). Over residues 42 to 54 (EPPPPQSTPPTPP) the composition is skewed to pro residues. Residues 109–155 (VLFVNRCNVCRKRVGLTGFRCRCGELFCPRHRHSETHECSFDYKTAG) form an AN1-type zinc finger. The Zn(2+) site is built by Cys115, Cys118, Cys129, Cys131, Cys136, His139, His145, and Cys147.

In terms of biological role, may be involved in environmental stress response. The protein is Zinc finger AN1 domain-containing stress-associated protein 15 (SAP15) of Oryza sativa subsp. japonica (Rice).